A 126-amino-acid chain; its full sequence is Fluoride-specific ion channel FluC (126 aa).

A run of 2 helical transmembrane segments spans residues 2–22 and 36–56; these read IKSL…RWLL and GTLV…AYFL. Na(+) contacts are provided by glycine 75 and serine 78. 2 helical membrane passes run 80 to 100 and 105 to 125; these read FSTF…IWAL and VHVI…TILF.

This sequence belongs to the fluoride channel Fluc/FEX (TC 1.A.43) family. Homodimer.

The protein resides in the cell inner membrane. It carries out the reaction fluoride(in) = fluoride(out). Na(+) is not transported, but it plays an essential structural role and its presence is essential for fluoride channel function. Functionally, fluoride-specific ion channel. Important for reducing fluoride concentration in the cell, thus reducing its toxicity. Is highly specific for fluoride ions and cannot transport chloride ions. This is Fluoride-specific ion channel FluC from Escherichia coli O1:K1 / APEC.